The primary structure comprises 140 residues: Phospholipase A2 (140 aa).

The first 21 residues, 1–21, serve as a signal peptide directing secretion; it reads MNPAHLLVLAAVCISLSGASS. The propeptide occupies 22-27; the sequence is IAPQPL. Intrachain disulfides connect Cys-38–Cys-97, Cys-52–Cys-139, Cys-54–Cys-70, Cys-69–Cys-125, Cys-76–Cys-118, Cys-86–Cys-111, and Cys-104–Cys-116. N-linked (GlcNAc...) asparagine glycosylation occurs at Asn-39. The Ca(2+) site is built by Tyr-53, Gly-55, and Gly-57. Residue His-73 is part of the active site. Residue Asp-74 coordinates Ca(2+). A glycan (N-linked (GlcNAc...) asparagine) is linked at Asn-107. The active site involves Asp-119.

This sequence belongs to the phospholipase A2 family. Group I subfamily. D49 sub-subfamily. Ca(2+) serves as cofactor. As to expression, expressed by the venom gland.

The protein resides in the secreted. The catalysed reaction is a 1,2-diacyl-sn-glycero-3-phosphocholine + H2O = a 1-acyl-sn-glycero-3-phosphocholine + a fatty acid + H(+). Functionally, PLA2 catalyzes the calcium-dependent hydrolysis of the 2-acyl groups in 3-sn-phosphoglycerides. The protein is Phospholipase A2 of Micrurus altirostris (Uruguayan coral snake).